The sequence spans 819 residues: DNA topoisomerase 4 subunit A (819 aa).

In terms of domain architecture, Topo IIA-type catalytic spans 30–496; sequence LPDIRDGLKP…QIIEIDTASL (467 aa). Y118 serves as the catalytic O-(5'-phospho-DNA)-tyrosine intermediate.

Belongs to the type II topoisomerase GyrA/ParC subunit family. ParC type 2 subfamily. Heterotetramer composed of ParC and ParE.

The protein localises to the cell membrane. It catalyses the reaction ATP-dependent breakage, passage and rejoining of double-stranded DNA.. Functionally, topoisomerase IV is essential for chromosome segregation. It relaxes supercoiled DNA. Performs the decatenation events required during the replication of a circular DNA molecule. This is DNA topoisomerase 4 subunit A from Streptococcus pyogenes serotype M3 (strain SSI-1).